The sequence spans 436 residues: GTPase Der (436 aa).

2 EngA-type G domains span residues 4–167 (PTVA…PVEE) and 175–351 (IRFS…ESQN). GTP is bound by residues 10–17 (GRPNVGKS), 57–61 (DTGGI), 119–122 (NKVD), 181–188 (GRPNVGKS), 229–233 (DTAGM), and 294–297 (NKWD). Positions 352 to 436 (KRIPSAVLND…PIHLIARKRK (85 aa)) constitute a KH-like domain.

This sequence belongs to the TRAFAC class TrmE-Era-EngA-EngB-Septin-like GTPase superfamily. EngA (Der) GTPase family. In terms of assembly, associates with the 50S ribosomal subunit.

Its function is as follows. GTPase that plays an essential role in the late steps of ribosome biogenesis. The polypeptide is GTPase Der (Streptococcus pyogenes serotype M3 (strain ATCC BAA-595 / MGAS315)).